Here is a 319-residue protein sequence, read N- to C-terminus: L-lactate dehydrogenase (319 aa).

NAD(+) contacts are provided by residues Val-17, Asp-38, Lys-43, Tyr-69, and 83-84; that span reads GA. Substrate is bound by residues Gln-86, Arg-92, and 124–127; that span reads NPVD. NAD(+)-binding positions include 122–124 and Ser-147; that span reads ATN. 152–155 contributes to the substrate binding site; that stretch reads DTAR. Positions 157 and 172 each coordinate beta-D-fructose 1,6-bisphosphate. His-179 functions as the Proton acceptor in the catalytic mechanism. A Phosphotyrosine modification is found at Tyr-224. Residue Thr-233 coordinates substrate.

It belongs to the LDH/MDH superfamily. LDH family. As to quaternary structure, homotetramer.

The protein resides in the cytoplasm. It carries out the reaction (S)-lactate + NAD(+) = pyruvate + NADH + H(+). It participates in fermentation; pyruvate fermentation to lactate; (S)-lactate from pyruvate: step 1/1. Its activity is regulated as follows. Allosterically activated by fructose 1,6-bisphosphate (FBP). Functionally, catalyzes the conversion of lactate to pyruvate. This chain is L-lactate dehydrogenase, found in Bacillus licheniformis (strain ATCC 14580 / DSM 13 / JCM 2505 / CCUG 7422 / NBRC 12200 / NCIMB 9375 / NCTC 10341 / NRRL NRS-1264 / Gibson 46).